Reading from the N-terminus, the 944-residue chain is 2-oxoglutarate dehydrogenase E1 component (944 aa).

The segment at 914 to 944 is disordered; that stretch reads RRRRSSPAEGDPTVHKKEQERIVSDSLTRKN. Positions 925 to 936 are enriched in basic and acidic residues; the sequence is PTVHKKEQERIV.

This sequence belongs to the alpha-ketoglutarate dehydrogenase family. Homodimer. Part of the 2-oxoglutarate dehydrogenase (OGDH) complex composed of E1 (2-oxoglutarate dehydrogenase), E2 (dihydrolipoamide succinyltransferase) and E3 (dihydrolipoamide dehydrogenase); the complex contains multiple copies of the three enzymatic components (E1, E2 and E3). The cofactor is thiamine diphosphate.

It catalyses the reaction N(6)-[(R)-lipoyl]-L-lysyl-[protein] + 2-oxoglutarate + H(+) = N(6)-[(R)-S(8)-succinyldihydrolipoyl]-L-lysyl-[protein] + CO2. In terms of biological role, E1 component of the 2-oxoglutarate dehydrogenase (OGDH) complex which catalyzes the decarboxylation of 2-oxoglutarate, the first step in the conversion of 2-oxoglutarate to succinyl-CoA and CO(2). The protein is 2-oxoglutarate dehydrogenase E1 component of Bacillus subtilis (strain 168).